A 305-amino-acid polypeptide reads, in one-letter code: Probable aspartoacylase (305 aa).

Zn(2+)-binding residues include H13 and E16. Substrate is bound by residues R55 and 62–63 (NR). Position 105 (H105) interacts with Zn(2+). Substrate is bound by residues E163 and Y273.

It belongs to the AspA/AstE family. Aspartoacylase subfamily. Zn(2+) serves as cofactor.

The catalysed reaction is an N-acyl-L-aspartate + H2O = a carboxylate + L-aspartate. This Prochlorococcus marinus (strain NATL2A) protein is Probable aspartoacylase.